Here is a 494-residue protein sequence, read N- to C-terminus: 3-octaprenyl-4-hydroxybenzoate carboxy-lyase (494 aa).

A Mn(2+)-binding site is contributed by asparagine 172. Prenylated FMN-binding positions include 175–177 (IYR), 189–191 (RWL), and 194–195 (RG). Glutamate 238 contacts Mn(2+). Residue aspartate 294 is the Proton donor of the active site.

This sequence belongs to the UbiD family. As to quaternary structure, homohexamer. It depends on prenylated FMN as a cofactor. The cofactor is Mn(2+).

It localises to the cell membrane. The catalysed reaction is a 4-hydroxy-3-(all-trans-polyprenyl)benzoate + H(+) = a 2-(all-trans-polyprenyl)phenol + CO2. Its pathway is cofactor biosynthesis; ubiquinone biosynthesis. Functionally, catalyzes the decarboxylation of 3-octaprenyl-4-hydroxy benzoate to 2-octaprenylphenol, an intermediate step in ubiquinone biosynthesis. The protein is 3-octaprenyl-4-hydroxybenzoate carboxy-lyase of Herminiimonas arsenicoxydans.